The chain runs to 119 residues: MKRVAFVFTQGPHGNAGGREGLDALLATSALSEDLGVFFIGDGVLQLLPGQQPEKILARNYIATFGVLPLYDVERCYLCQASLQERGLSQVTDWVLDAEVLAPDALGQLLAGYDAVMTF.

Belongs to the DsrF/TusC family. As to quaternary structure, heterohexamer, formed by a dimer of trimers. The hexameric TusBCD complex contains 2 copies each of TusB, TusC and TusD. The TusBCD complex interacts with TusE.

The protein resides in the cytoplasm. Functionally, part of a sulfur-relay system required for 2-thiolation of 5-methylaminomethyl-2-thiouridine (mnm(5)s(2)U) at tRNA wobble positions. In Serratia proteamaculans (strain 568), this protein is Protein TusC.